A 260-amino-acid chain; its full sequence is Transcription factor SUM-1 (260 aa).

Positions 112-163 (DKRKAATLRERRRLRKVNEAFEALKRHTCANPNQRLPKVEILRNAIEYIEKL) constitute a bHLH domain. The disordered stretch occupies residues 171–208 (KANGDSEMDSAETSSNTSDAMTDGSSPGSYSSDKAQQY). Residues 181–205 (AETSSNTSDAMTDGSSPGSYSSDKA) are compositionally biased toward polar residues.

As to quaternary structure, efficient DNA binding requires dimerization with another bHLH protein. Homodimer, and heterodimer with the ubiquitous bHLH protein E12.

It localises to the nucleus. Regulatory factor during embryogenesis. Conversion of pluripotent secondary mesenchyme cells to myogenic cells. It binds to the MCK enhancer element. The chain is Transcription factor SUM-1 (SUM-1) from Lytechinus variegatus (Green sea urchin).